The following is a 988-amino-acid chain: Voltage-gated delayed rectifier potassium channel KCNH5 (988 aa).

At 1–217 the chain is on the cytoplasmic side; that stretch reads MPGGKRGLVA…LHYCAFKTTW (217 aa). In terms of domain architecture, PAS spans 14 to 86; it reads TFLENIVRRS…TIEKVRQTFD (73 aa). One can recognise a PAC domain in the interval 91–143; the sequence is NCFEVLLYKKNRTPVWFYMQIAPIRNEHEKVVLFLCTFKDITLFKQPIEDDST. The helical transmembrane segment at 218-238 threads the bilayer; the sequence is DWVILILTFYTAIMVPYNVSF. Over 239–243 the chain is Extracellular; the sequence is KTKQN. The helical transmembrane segment at 244-264 threads the bilayer; it reads NIAWLVLDSVVDVIFLVDIVL. Over 265–291 the chain is Cytoplasmic; sequence NFHTTFVGPGGEVISDPKLIRMNYLKT. Residues 292–312 traverse the membrane as a helical segment; the sequence is WFVIDLLSCLPYDIINAFENV. Over 313–319 the chain is Extracellular; that stretch reads DEGISSL. Residues 320 to 340 form a helical; Voltage-sensor membrane-spanning segment; sequence FSSLKVVRLLRLGRVARKLDH. Residues 341 to 346 lie on the Cytoplasmic side of the membrane; that stretch reads YLEYGA. A helical membrane pass occupies residues 347–367; sequence AVLVLLVCVFGLVAHWLACIW. At 368-419 the chain is on the extracellular side; that stretch reads YSIGDYEVIDEVTNTIQIDSWLYQLALSIGTPYRYNTSAGIWEGGPSKDSLY. Asn403 is a glycosylation site (N-linked (GlcNAc...) asparagine). The pore-forming intramembrane region spans 420 to 440; sequence VSSLYFTMTSLTTIGFGNIAP. The Selectivity filter signature appears at 432–437; that stretch reads TIGFGN. The Extracellular segment spans residues 441 to 446; sequence TTDVEK. The chain crosses the membrane as a helical span at residues 447-467; sequence MFSVAMMMVGSLLYATIFGNV. At 468 to 988 the chain is on the cytoplasmic side; it reads TTIFQQMYAN…PESDKDEINF (521 aa). 550–667 serves as a coordination point for a nucleoside 3',5'-cyclic phosphate; it reads AFRLASDGCL…NSFSRNLTLT (118 aa). The calmodulin-binding stretch occupies residues 704–715; that stretch reads HPVRKLFQKFKQ. Residues 718-742 form a disordered region; it reads ELRNQGSAQSDPERSQLQVESRPLQ. Residues 721–742 show a composition bias toward polar residues; the sequence is NQGSAQSDPERSQLQVESRPLQ. Lys785 is covalently cross-linked (Glycyl lysine isopeptide (Lys-Gly) (interchain with G-Cter in ubiquitin)). Disordered regions lie at residues 839–897 and 946–965; these read LLSE…AKHP and SVPQ…PPQI. A compositionally biased stretch (basic and acidic residues) spans 871–885; it reads SDLRLDKAGEARSPL. At Ser883 the chain carries Phosphoserine. The interval 909–948 is CAD (involved in subunit assembly); the sequence is TLQEVKHELKEDIQLLSCRMTALEKQVAEILKLLSEKSVP.

It belongs to the potassium channel family. H (Eag) (TC 1.A.1.20) subfamily. Kv10.2/KCNH5 sub-subfamily. Homotetramer. The potassium channel is probably composed of a homo- or heterotetrameric complex of pore-forming alpha subunits that can associate with modulating beta subunits. Heteromultimer with KCNH1/EAG. In terms of tissue distribution, detected in adult testis and in embryonic and adult brain, but not in other tissues. Highly expressed in specific brain areas, such as neocortex, olfactory bulb, primary olfactory cortex and brain stem. In cortex, expression is concentrated in a narrow band toward the middle lamella (layer IV). Moderately expressed in spinal cord, dorsal thalamic nuclei, medial hypothalamus, colliculus, lateral lemniscus, pontine nuclei and Islands of Calleja.

Its subcellular location is the membrane. It carries out the reaction K(+)(in) = K(+)(out). Its activity is regulated as follows. Inhibited by low nanomolar concentrations of cytosolic calcium. Functionally, pore-forming (alpha) subunit of a voltage-gated delayed rectifier potassium channel that mediates outward-rectifying potassium currents which, on depolarization, reaches a steady-state level and do not inactivate. The kinetic is characterized by a slow activation time course and a small voltage dependence of the activation time constants, therefore, starts to open at more negative voltages. The activation kinetics depend on the prepulse potential and external divalent cation concentration. The time course of activation is biphasic with a fast and a slowly activating current component. With negative prepulses, the current activation is delayed and slowed down several fold, whereas more positive prepulses speed up activation, therefore the activation rate depends on holding potential. The polypeptide is Voltage-gated delayed rectifier potassium channel KCNH5 (Rattus norvegicus (Rat)).